A 351-amino-acid polypeptide reads, in one-letter code: GTPase Obg (351 aa).

An Obg domain is found at 1 to 159 (MKFLDQAKVY…RWIWLRLKLI (159 aa)). Residues 160-328 (ADVGLVGLPN…LCGSAWDIVL (169 aa)) enclose the OBG-type G domain. GTP-binding positions include 166 to 173 (GLPNAGKS), 191 to 195 (FTTLY), 213 to 216 (DIPG), 280 to 283 (NKID), and 309 to 311 (SGV). Mg(2+) is bound by residues serine 173 and threonine 193.

Belongs to the TRAFAC class OBG-HflX-like GTPase superfamily. OBG GTPase family. As to quaternary structure, monomer. Mg(2+) is required as a cofactor.

It localises to the cytoplasm. In terms of biological role, an essential GTPase which binds GTP, GDP and possibly (p)ppGpp with moderate affinity, with high nucleotide exchange rates and a fairly low GTP hydrolysis rate. Plays a role in control of the cell cycle, stress response, ribosome biogenesis and in those bacteria that undergo differentiation, in morphogenesis control. This chain is GTPase Obg, found in Maricaulis maris (strain MCS10) (Caulobacter maris).